Reading from the N-terminus, the 231-residue chain is MNRLLSLFALGGAVLLAGCVAPTAKPNDPYYAPVLPRTPLPAAANNGSIYQAGFEQNLYSDRKAFRVGDIITITLNERTSASKNAGSQIQKDSSANIGLTSLFGATPSTNNPFGSGDLSLEAGYSGERATKGDSKATQGNTLTGSITVTVAEVLPNGIIAVRGEKWMTLNTGEELVRIAGLIRADDIATDNTVPSTRVADARITYSGTGSFADASQPGWLDRFFLSPLWPF.

The signal sequence occupies residues 1–18 (MNRLLSLFALGGAVLLAG). A lipid anchor (N-palmitoyl cysteine) is attached at Cys-19. The S-diacylglycerol cysteine moiety is linked to residue Cys-19.

It belongs to the FlgH family. The basal body constitutes a major portion of the flagellar organelle and consists of four rings (L,P,S, and M) mounted on a central rod.

Its subcellular location is the cell outer membrane. The protein localises to the bacterial flagellum basal body. Functionally, assembles around the rod to form the L-ring and probably protects the motor/basal body from shearing forces during rotation. In Pseudomonas putida (strain W619), this protein is Flagellar L-ring protein.